The sequence spans 549 residues: Zinc finger protein 18 (549 aa).

In terms of domain architecture, SCAN box spans 41–123; sequence RQLFRQFRYQ…TLVESLKGDP (83 aa). Residues 211–283 enclose the KRAB domain; sequence DLGASLLPAA…YLHVNEKIPR (73 aa). C2H2-type zinc fingers lie at residues 408 to 430, 436 to 458, 464 to 486, 492 to 514, and 520 to 542; these read PTCRECGKTFYRNSQLIFHQRTH, FQCTICKKAFLRSSDFVKHQRTH, CKCDYCGKGFSDFSGLRHHEKIH, YKCPICEKSFIQRSNFNRHQRVH, and YKCSHCGKSFSWSSSLDKHQRSH.

It belongs to the krueppel C2H2-type zinc-finger protein family.

It localises to the nucleus. Functionally, may be involved in transcriptional regulation. The protein is Zinc finger protein 18 (ZNF18) of Homo sapiens (Human).